The primary structure comprises 845 residues: Proto-oncogene vav (845 aa).

The region spanning methionine 1–proline 119 is the Calponin-homology (CH) domain. In terms of domain architecture, DH spans lysine 194–valine 373. Residues arginine 402–serine 504 enclose the PH domain. The segment at glycine 515–cysteine 564 adopts a Phorbol-ester/DAG-type zinc-finger fold. In terms of domain architecture, SH3 1 spans leucine 592–histidine 660. In terms of domain architecture, SH2 spans tryptophan 671–phenylalanine 765. The region spanning lysine 782–serine 842 is the SH3 2 domain. Phosphotyrosine occurs at positions 826 and 844.

Interacts with SHB. Interacts with SH2B2, GRB2, GRB3, DOCK2, SLA, TEC and ZNF655/VIK. Interacts with SIAH2; without leading to its degradation. Associates with BLNK, PLCG1, GRB2 and NCK1 in a B-cell antigen receptor-dependent fashion. Interacts with CBLB; which inhibits tyrosine phosphorylation and down-regulates activity. May interact with CCPG1. Interacts with CLNK. Interacts with THEMIS2. Interacts with NEK3 and this interaction is prolactin-dependent. Interacts with ITK. Interacts with PTK2B/PYK2. Interacts with HCK. Interacts with PTK2B/PYK2. Interacts (via SH2 domain) with SYK. Interacts with ANKRD54. Interacts with CD6. Interacts with isoform 2 of CRACR2A. Interacts with LCP2; this interaction plays a role in TCR-mediated cytokine production. In terms of processing, phosphorylated on tyrosine residues by HCK in response to IFNG and bacterial lipopolysaccharide (LPS). Phosphorylated by FYN. In terms of tissue distribution, widely expressed in hematopoietic cells but not in other cell types.

Couples tyrosine kinase signals with the activation of the Rho/Rac GTPases, thus leading to cell differentiation and/or proliferation. The polypeptide is Proto-oncogene vav (VAV1) (Homo sapiens (Human)).